A 360-amino-acid polypeptide reads, in one-letter code: Phospho-N-acetylmuramoyl-pentapeptide-transferase (360 aa).

Residues 1-25 (MLVWLAEHLVKYYSGFNVFSYLTFR) lie on the Periplasmic side of the membrane. Residues 26–46 (AIVSLLTALFISLWMGPRMIA) form a helical membrane-spanning segment. Residues 47–71 (RLQKLSFGQVVRNDGPESHFSKRGT) are Cytoplasmic-facing. Residues 72-92 (PTMGGIMILTAIVISVLLWAY) traverse the membrane as a helical segment. A topological domain (periplasmic) is located at residue Pro-93. A helical transmembrane segment spans residues 94 to 114 (SNPYVWCVLVVLIGYGIIGFV). Topologically, residues 115-131 (DDYHKVVRKDTKGLIAR) are cytoplasmic. A helical transmembrane segment spans residues 132 to 152 (WKYFWMSVIALGVAFALYLVG). Topologically, residues 153-167 (KDTPATQLVVPFFKD) are periplasmic. A helical membrane pass occupies residues 168-188 (VMPQLGLFYILLSYFVIVGTG). Over 189 to 198 (NAVNLTDGLD) the chain is Cytoplasmic. The chain crosses the membrane as a helical span at residues 199–219 (GLAIMPTVFVAAGFALVAWAT). The Periplasmic portion of the chain corresponds to 220 to 235 (GNMNFANYLHIPYLRY). The chain crosses the membrane as a helical span at residues 236–256 (AGELVIVCTAIVGAGLGFLWF). Topologically, residues 257–262 (NTYPAQ) are cytoplasmic. The helical transmembrane segment at 263-283 (VFMGDVGSLALGGALGIIAVL) threads the bilayer. Topologically, residues 284 to 287 (LRQE) are periplasmic. A helical membrane pass occupies residues 288-308 (FLLVIMGGVFVVETLSVILQV). Topologically, residues 309–337 (GSFKLRGQRIFRMAPIHHHYELKGWPEPR) are cytoplasmic. The helical transmembrane segment at 338-358 (VIVRFWIISLMLVLIGLATLK) threads the bilayer. Residues 359-360 (VR) lie on the Periplasmic side of the membrane.

Belongs to the glycosyltransferase 4 family. MraY subfamily. Mg(2+) serves as cofactor.

Its subcellular location is the cell inner membrane. The enzyme catalyses UDP-N-acetyl-alpha-D-muramoyl-L-alanyl-gamma-D-glutamyl-meso-2,6-diaminopimeloyl-D-alanyl-D-alanine + di-trans,octa-cis-undecaprenyl phosphate = di-trans,octa-cis-undecaprenyl diphospho-N-acetyl-alpha-D-muramoyl-L-alanyl-D-glutamyl-meso-2,6-diaminopimeloyl-D-alanyl-D-alanine + UMP. The protein operates within cell wall biogenesis; peptidoglycan biosynthesis. In terms of biological role, catalyzes the initial step of the lipid cycle reactions in the biosynthesis of the cell wall peptidoglycan: transfers peptidoglycan precursor phospho-MurNAc-pentapeptide from UDP-MurNAc-pentapeptide onto the lipid carrier undecaprenyl phosphate, yielding undecaprenyl-pyrophosphoryl-MurNAc-pentapeptide, known as lipid I. The chain is Phospho-N-acetylmuramoyl-pentapeptide-transferase from Salmonella paratyphi A (strain ATCC 9150 / SARB42).